We begin with the raw amino-acid sequence, 630 residues long: Terpinolene synthase, chloroplastic (630 aa).

Residues 1–52 (MALVSILPLSSKSVLHKSWIVSTYEHKAISRTIPNLGLRGRGKSVTHSLRMS) constitute a chloroplast transit peptide. Positions 381, 385, 525, and 533 each coordinate Mg(2+). A DDXXD motif motif is present at residues 381–385 (DDIYD).

The protein belongs to the terpene synthase family. Tpsd subfamily. Requires Mg(2+) as cofactor. Mn(2+) is required as a cofactor. It depends on K(+) as a cofactor.

It is found in the plastid. Its subcellular location is the chloroplast. It catalyses the reaction (2E)-geranyl diphosphate = terpinolene + diphosphate. It participates in terpene metabolism; oleoresin biosynthesis. Its function is as follows. Involved in defensive oleoresin formation in conifers in response to insect attack or other injury. Involved in monoterpene (C10) olefins biosynthesis. The polypeptide is Terpinolene synthase, chloroplastic (ag9) (Abies grandis (Grand fir)).